The primary structure comprises 394 residues: HORMA domain-containing protein 1 (394 aa).

The region spanning 24 to 226 (HQSLVLVKRL…TPFHIFKVKV (203 aa)) is the HORMA domain. Residues 253–282 (ILRDKDVEDEQEHYTSDDLDIETKMEEQEK) are compositionally biased toward basic and acidic residues. Residues 253 to 394 (ILRDKDVEDE…RKFSEPKEHI (142 aa)) are disordered. Positions 288-300 (ELEEPSLVCEEDE) are enriched in acidic residues. 2 stretches are compositionally biased toward polar residues: residues 310–324 (LSIS…VNKT) and 343–352 (KMANGNQPVK). The segment covering 362–374 (QHESGRIVLHHFD) has biased composition (basic and acidic residues). Ser376 carries the phosphoserine modification. Positions 383 to 386 (KRRK) match the Nuclear localization signal motif.

As to quaternary structure, interacts with HORMAD2. Interacts with IHO1. In terms of processing, phosphorylated at Ser-377 in a SPO11-dependent manner. As to expression, testis-specific. Over-expressed in carcinomas.

Its subcellular location is the nucleus. The protein resides in the chromosome. Functionally, plays a key role in meiotic progression. Regulates 3 different functions during meiosis: ensures that sufficient numbers of processed DNA double-strand breaks (DSBs) are available for successful homology search by increasing the steady-state numbers of single-stranded DSB ends. Promotes synaptonemal-complex formation independently of its role in homology search. Plays a key role in the male mid-pachytene checkpoint and the female meiotic prophase checkpoint: required for efficient build-up of ATR activity on unsynapsed chromosome regions, a process believed to form the basis of meiotic silencing of unsynapsed chromatin (MSUC) and meiotic prophase quality control in both sexes. The polypeptide is HORMA domain-containing protein 1 (Homo sapiens (Human)).